Consider the following 483-residue polypeptide: Aspartyl/glutamyl-tRNA(Asn/Gln) amidotransferase subunit B (483 aa).

Belongs to the GatB/GatE family. GatB subfamily. In terms of assembly, heterotrimer of A, B and C subunits.

It carries out the reaction L-glutamyl-tRNA(Gln) + L-glutamine + ATP + H2O = L-glutaminyl-tRNA(Gln) + L-glutamate + ADP + phosphate + H(+). The enzyme catalyses L-aspartyl-tRNA(Asn) + L-glutamine + ATP + H2O = L-asparaginyl-tRNA(Asn) + L-glutamate + ADP + phosphate + 2 H(+). Functionally, allows the formation of correctly charged Asn-tRNA(Asn) or Gln-tRNA(Gln) through the transamidation of misacylated Asp-tRNA(Asn) or Glu-tRNA(Gln) in organisms which lack either or both of asparaginyl-tRNA or glutaminyl-tRNA synthetases. The reaction takes place in the presence of glutamine and ATP through an activated phospho-Asp-tRNA(Asn) or phospho-Glu-tRNA(Gln). The chain is Aspartyl/glutamyl-tRNA(Asn/Gln) amidotransferase subunit B from Roseiflexus castenholzii (strain DSM 13941 / HLO8).